The primary structure comprises 396 residues: MPTDFLFTSESVTEGHPDKIADQISDGVLDAIIAKDPQARVAVETLVKTGLAIVAGEVTTNCYVDIPKLVRSTICRIGYTDSSMGYDGNTCGVMVAIEGQSQDIARGVDNKKDQGAGDQGMMFGFACDETPELMPAPIHYAHAITRRLADVRRKQHPWIRPDGKSQVTVEYRDGRPARIDAVVVSTQHSDEVSNKKIQEAIREDVIAKALPKKLIDNKTKFFINPTGRFVVGGPMGDSGLTGRKIIVDTYGGMGRHGGGAFSGKDPSKVDRSAAYMGRHIAKTVVAAGLARRCEVQVSYAIGVAEPVSVMVETFGTATVPEERIALAVRKTFGLRPREITEYLNLLRPIYQKTAAYGHFGRTEKEFTWERVEEKKDALRDAAKSATPSGGRRLKAV.

H16 lines the ATP pocket. D18 provides a ligand contact to Mg(2+). E44 serves as a coordination point for K(+). L-methionine-binding residues include E57 and Q100. Positions 100-110 (QSQDIARGVDN) are flexible loop. ATP contacts are provided by residues 162–164 (DGK), 228–229 (RF), D237, 243–244 (RK), A260, and K264. D237 lines the L-methionine pocket. K268 lines the L-methionine pocket.

It belongs to the AdoMet synthase family. Homotetramer; dimer of dimers. Mg(2+) serves as cofactor. It depends on K(+) as a cofactor.

It localises to the cytoplasm. It catalyses the reaction L-methionine + ATP + H2O = S-adenosyl-L-methionine + phosphate + diphosphate. It participates in amino-acid biosynthesis; S-adenosyl-L-methionine biosynthesis; S-adenosyl-L-methionine from L-methionine: step 1/1. Catalyzes the formation of S-adenosylmethionine (AdoMet) from methionine and ATP. The overall synthetic reaction is composed of two sequential steps, AdoMet formation and the subsequent tripolyphosphate hydrolysis which occurs prior to release of AdoMet from the enzyme. This Myxococcus xanthus (strain DK1622) protein is S-adenosylmethionine synthase.